The primary structure comprises 244 residues: Ribosomal RNA small subunit methyltransferase NEP1 (244 aa).

The disordered stretch occupies residues 1–33 (MSAASGGFQPRERRFSVQEQDWETTPPKKLRLG). 2 positions are modified to phosphoserine: Ser-5 and Ser-16. Residues Thr-176, Gly-201, Gly-206, and 219-224 (ISNYPL) each bind S-adenosyl-L-methionine.

It belongs to the class IV-like SAM-binding methyltransferase superfamily. RNA methyltransferase NEP1 family. As to quaternary structure, homodimer. Part of the small subunit (SSU) processome, composed of more than 70 proteins and the RNA chaperone small nucleolar RNA (snoRNA) U3.

The protein resides in the nucleus. It localises to the nucleolus. The enzyme catalyses pseudouridine(1248) in human 18S rRNA + S-adenosyl-L-methionine = N(1)-methylpseudouridine(1248) in human 18S rRNA + S-adenosyl-L-homocysteine + H(+). S-adenosyl-L-methionine-dependent pseudouridine N(1)-methyltransferase that methylates pseudouridine at position in 18S rRNA. Involved the biosynthesis of the hypermodified N1-methyl-N3-(3-amino-3-carboxypropyl) pseudouridine (m1acp3-Psi) conserved in eukaryotic 18S rRNA. Is not able to methylate uridine at this position. Also has an essential role in 40S ribosomal subunit biogenesis independent on its methyltransferase activity, facilitating the incorporation of ribosomal protein S19 during the formation of pre-ribosomes. Part of the small subunit (SSU) processome, first precursor of the small eukaryotic ribosomal subunit. During the assembly of the SSU processome in the nucleolus, many ribosome biogenesis factors, an RNA chaperone and ribosomal proteins associate with the nascent pre-rRNA and work in concert to generate RNA folding, modifications, rearrangements and cleavage as well as targeted degradation of pre-ribosomal RNA by the RNA exosome. The sequence is that of Ribosomal RNA small subunit methyltransferase NEP1 from Mus musculus (Mouse).